Here is a 444-residue protein sequence, read N- to C-terminus: Prenyltransferase phnF (444 aa).

This sequence belongs to the tryptophan dimethylallyltransferase family.

The catalysed reaction is 2,3,4,7,9-pentahydroxy-6-methyl-1H-phenalen-1-one + dimethylallyl diphosphate = 2,4,7,9-tetrahydroxy-6-methyl-8-(2-methylbut-3-en-2-yl)-1-oxo-1H-phenalen-3-ol + diphosphate. It participates in secondary metabolite biosynthesis. Its function is as follows. Prenyltransferase; part of the gene cluster that mediates the biosynthesis of phenalenones such as herqueinone, compounds that have been reported to treat tumors, bacterial infections and/or mycoses, and rheumatic diseases. The non-reducing polyketide synthase phnA synthesizes the heptaketide backbone and cyclizes it into the angular, hemiketal-containing naphtho-gamma-pyrone prephenalenone. The product template (PT) domain of phnA catalyzes only the C4-C9 aldol condensation, which is unprecedented among known PT domains. The transformation of prephenalenone to phenalenones requires an FAD-dependent monooxygenase phnB, which catalyzes the C2 aromatic hydroxylation of prephenalenone and ring opening of the gamma-pyrone ring simultaneously. Subsequent intramolecular deprotonation of C3 phenolic oxygen accelerates phenalenone ring closure to yield the tricyclic phenalenone core with a C2 hydroxylation. The prenyltransferase phnF further catalyzes reverse C-prenylation of phenalenone by direct electrophilic substitution at C6, or possibly via first a forward O-prenylation of a neighboring phenol in phenalenone, followed by a Claisen rearrangement. The hydroalkoxylation enzyme phnH catalyzes the 5-exo-trig cyclization via acid catalysis after the spontaneous deprotonation of 7-OH, which leads to the formation of the dihydrobenzofuran atrovenetin. Atrovenetin is further converted to deoxyherqueinone by the O-methyltransferase phnC which can methylate C2-OH to stabilize the northern portion of the phenalenone core. Finally, the oxidoreductase phnG converts deoxyherqueinone to herqueinone via C6 hydroxylation. The protein is Prenyltransferase phnF of Penicillium herquei.